Reading from the N-terminus, the 1042-residue chain is Putative type I restriction enzyme MjaIXP endonuclease subunit (1042 aa).

The Helicase ATP-binding domain occupies G323–A487. Residues D439 to H442 carry the DEAH box motif. The Helicase C-terminal domain maps to L551–K731.

It belongs to the HsdR family. As to quaternary structure, the type I restriction/modification system is composed of three polypeptides R, M and S.

The enzyme catalyses Endonucleolytic cleavage of DNA to give random double-stranded fragments with terminal 5'-phosphates, ATP is simultaneously hydrolyzed.. In terms of biological role, the restriction (R) subunit of a type I restriction enzyme that recognizes 5'-CCAN(5)GTR-3' and cleaves a random distance away. The R subunit is required for both nuclease and ATPase activities, but not for modification. After locating a non-methylated recognition site, the enzyme complex serves as a molecular motor that translocates DNA in an ATP-dependent manner until a collision occurs that triggers cleavage. In Methanocaldococcus jannaschii (strain ATCC 43067 / DSM 2661 / JAL-1 / JCM 10045 / NBRC 100440) (Methanococcus jannaschii), this protein is Putative type I restriction enzyme MjaIXP endonuclease subunit.